A 245-amino-acid chain; its full sequence is 1-(5-phosphoribosyl)-5-[(5-phosphoribosylamino)methylideneamino] imidazole-4-carboxamide isomerase (245 aa).

The active-site Proton acceptor is the Asp7. Asp129 functions as the Proton donor in the catalytic mechanism.

It belongs to the HisA/HisF family.

It localises to the cytoplasm. It catalyses the reaction 1-(5-phospho-beta-D-ribosyl)-5-[(5-phospho-beta-D-ribosylamino)methylideneamino]imidazole-4-carboxamide = 5-[(5-phospho-1-deoxy-D-ribulos-1-ylimino)methylamino]-1-(5-phospho-beta-D-ribosyl)imidazole-4-carboxamide. The protein operates within amino-acid biosynthesis; L-histidine biosynthesis; L-histidine from 5-phospho-alpha-D-ribose 1-diphosphate: step 4/9. The chain is 1-(5-phosphoribosyl)-5-[(5-phosphoribosylamino)methylideneamino] imidazole-4-carboxamide isomerase from Idiomarina loihiensis (strain ATCC BAA-735 / DSM 15497 / L2-TR).